The primary structure comprises 422 residues: Serine--tRNA ligase (422 aa).

Residue 226 to 228 coordinates L-serine; that stretch reads TSE. ATP-binding positions include 257–259 and valine 273; that span reads RRE. Glutamate 280 is a binding site for L-serine. 344 to 347 contacts ATP; sequence ELTS. Threonine 379 is a binding site for L-serine.

Belongs to the class-II aminoacyl-tRNA synthetase family. Type-1 seryl-tRNA synthetase subfamily. Homodimer. The tRNA molecule binds across the dimer.

The protein localises to the cytoplasm. The enzyme catalyses tRNA(Ser) + L-serine + ATP = L-seryl-tRNA(Ser) + AMP + diphosphate + H(+). The catalysed reaction is tRNA(Sec) + L-serine + ATP = L-seryl-tRNA(Sec) + AMP + diphosphate + H(+). It functions in the pathway aminoacyl-tRNA biosynthesis; selenocysteinyl-tRNA(Sec) biosynthesis; L-seryl-tRNA(Sec) from L-serine and tRNA(Sec): step 1/1. In terms of biological role, catalyzes the attachment of serine to tRNA(Ser). Is also able to aminoacylate tRNA(Sec) with serine, to form the misacylated tRNA L-seryl-tRNA(Sec), which will be further converted into selenocysteinyl-tRNA(Sec). The sequence is that of Serine--tRNA ligase from Corynebacterium glutamicum (strain ATCC 13032 / DSM 20300 / JCM 1318 / BCRC 11384 / CCUG 27702 / LMG 3730 / NBRC 12168 / NCIMB 10025 / NRRL B-2784 / 534).